The primary structure comprises 541 residues: Zingiberene synthase (541 aa).

Positions 295, 299, 439, 443, and 447 each coordinate Mg(2+). A DDXXD motif motif is present at residues 295–299; the sequence is DDIID.

This sequence belongs to the terpene synthase family. Mg(2+) serves as cofactor. Mn(2+) is required as a cofactor.

The protein resides in the cytoplasm. The enzyme catalyses (2E,6E)-farnesyl diphosphate = alpha-zingiberene + diphosphate. Its pathway is secondary metabolite biosynthesis; terpenoid biosynthesis. In terms of biological role, sesquiterpene synthase converting farnesyl diphosphate into two major products, zingiberene &gt; beta-sesquiphellandrene, and five minor products, 7-epi-sesquithujene, sesquisabinene A, (E)-alpha-bergamotene, (E)-beta-farnesene and beta-bisabolene. Can also accept geranyl diphosphate as substrate, producing nine monoterpenes, with myrcene, limonene and alpha-terpinolene as the major products. The polypeptide is Zingiberene synthase (TPS1) (Sorghum bicolor (Sorghum)).